We begin with the raw amino-acid sequence, 923 residues long: Isoleucine--tRNA ligase (923 aa).

Residues 57 to 67 (PYANGDIHIGT) carry the 'HIGH' region motif. Glu561 is a binding site for L-isoleucyl-5'-AMP. The 'KMSKS' region signature appears at 602–606 (AMHKS). Position 605 (Lys605) interacts with ATP. The Zn(2+) site is built by Cys895, Cys898, Cys915, and Cys918.

This sequence belongs to the class-I aminoacyl-tRNA synthetase family. IleS type 1 subfamily. Monomer. The cofactor is Zn(2+).

Its subcellular location is the cytoplasm. The enzyme catalyses tRNA(Ile) + L-isoleucine + ATP = L-isoleucyl-tRNA(Ile) + AMP + diphosphate. Its function is as follows. Catalyzes the attachment of isoleucine to tRNA(Ile). As IleRS can inadvertently accommodate and process structurally similar amino acids such as valine, to avoid such errors it has two additional distinct tRNA(Ile)-dependent editing activities. One activity is designated as 'pretransfer' editing and involves the hydrolysis of activated Val-AMP. The other activity is designated 'posttransfer' editing and involves deacylation of mischarged Val-tRNA(Ile). The polypeptide is Isoleucine--tRNA ligase (Brachyspira hyodysenteriae (strain ATCC 49526 / WA1)).